Here is a 354-residue protein sequence, read N- to C-terminus: Squamosa promoter-binding-like protein 15 (354 aa).

A disordered region spans residues 1-25 (MELLMCSGQAESGGSSSTESSSLSG). The span at 7 to 25 (SGQAESGGSSSTESSSLSG) shows a compositional bias: low complexity. The segment at 56 to 133 (TARCQVEGCR…ACHNERRRKP (78 aa)) adopts an SBP-type zinc-finger fold. The Zn(2+) site is built by Cys-59, Cys-64, Cys-81, His-84, Cys-100, Cys-103, His-107, and Cys-119. Residues 116 to 132 (KRSCRRRLACHNERRRK) carry the Bipartite nuclear localization signal motif.

Zn(2+) serves as cofactor.

It is found in the nucleus. Its function is as follows. Trans-acting factor that binds specifically to the consensus nucleotide sequence 5'-TNCGTACAA-3'. In Arabidopsis thaliana (Mouse-ear cress), this protein is Squamosa promoter-binding-like protein 15 (SPL15).